The chain runs to 819 residues: Protein kinase C-binding protein NELL2 (819 aa).

The first 24 residues, 1 to 24 (MHAMESRVLLRTFCVILGLEAVWG), serve as a signal peptide directing secretion. Residues asparagine 56, asparagine 228, asparagine 296, and asparagine 301 are each glycosylated (N-linked (GlcNAc...) asparagine). The region spanning 58–231 (TKAFLFQDSP…AQCPDLNRTC (174 aa)) is the Laminin G-like domain. Residues 275 to 334 (RTCTMKGTTYREFESWTDGCKNCTCLNGTIQCETLVCPAPDCPAKSAPAYVDGKCCKECK) form the VWFC 1 domain. In terms of domain architecture, EGF-like 1 spans 400-442 (GYDFCSEKHTCMENSVCRNLNDRAVCSCRDGFRALREDNAYCE). 3 cysteine pairs are disulfide-bonded: cysteine 404–cysteine 416, cysteine 410–cysteine 425, and cysteine 427–cysteine 441. Aspartate 443, isoleucine 444, and glutamate 446 together coordinate Ca(2+). Residues 443 to 484 (DIDECAEGRHYCRENTMCVNTPGSFLCICQTGYIRIDDYSCT) form the EGF-like 2; calcium-binding domain. Intrachain disulfides connect cysteine 447–cysteine 460, cysteine 454–cysteine 469, cysteine 471–cysteine 483, cysteine 489–cysteine 502, cysteine 496–cysteine 511, cysteine 513–cysteine 524, cysteine 528–cysteine 538, cysteine 532–cysteine 544, and cysteine 546–cysteine 555. Ca(2+) is bound by residues asparagine 462, threonine 463, and serine 466. In terms of domain architecture, EGF-like 3; calcium-binding spans 485–525 (EHDECLTNQHNCDENALCFNTVGGHNCVCKPGYTGNGTTCK). Asparagine 520 carries N-linked (GlcNAc...) asparagine glycosylation. The EGF-like 4 domain occupies 526 to 556 (AFCKDGCRNGGACIAANVCACPQGFTGPSCE). An O-linked (GlcNAc...) threonine glycan is attached at threonine 551. Ca(2+) contacts are provided by aspartate 558, isoleucine 559, and glutamate 561. The region spanning 558-604 (DIDECSEGFVQCDSRANCINLPGWYHCECRDGYHDNGMFAPGGESCE) is the EGF-like 5; calcium-binding domain. 3 cysteine pairs are disulfide-bonded: cysteine 562–cysteine 575, cysteine 569–cysteine 584, and cysteine 586–cysteine 603. Asparagine 577, leucine 578, and tryptophan 581 together coordinate Ca(2+). The Ca(2+) site is built by aspartate 605, isoleucine 606, and glutamate 608. The region spanning 605–640 (DIDECGTGRHSCANDTICFNLDGGYDCRCPHGKNCT) is the EGF-like 6; calcium-binding domain. Cystine bridges form between cysteine 609–cysteine 622, cysteine 616–cysteine 631, and cysteine 633–cysteine 639. Asparagine 618 is a glycosylation site (N-linked (GlcNAc...) asparagine). 3 residues coordinate Ca(2+): asparagine 624, leucine 625, and glycine 628. Asparagine 638 is a glycosylation site (N-linked (GlcNAc...) asparagine). VWFC domains lie at 641-696 (GDCV…PECD) and 701-759 (SQCL…PRCV).

As to quaternary structure, homotrimer. Binds to PRKCB. Interacts with NICOL1; this interaction triggers epididymal differentiation. In terms of assembly, binds to PRKCB. In terms of tissue distribution, widely expressed. Expressed in cortical astrocytes but not in neuron. Widely expressed in brain. High expression is observed in telencephalic and diencephalic glutamatergic neurons, while no expression is found in GABAergic and GNRH neurons.

It is found in the secreted. The protein localises to the cytoplasm. Functionally, plays multiple roles In neural tissues, regulates neuronal proliferation, survival, differentiation, polarization, as well as axon guidance and synaptic functions. Plays an important role in axon development during neuronal differentiation through the MAPK intracellular signaling pathway. Via binding to its receptor ROBO3, plays a role in axon guidance, functioning as a repulsive axon guidance cue that contributes to commissural axon guidance to the midline. Required for neuron survival through the modulation of MAPK signaling pathways too. Involved in the regulation of hypothalamic GNRH secretion and the control of puberty. Its function is as follows. Epididymal-secreted protein that signals through a ROS1-pathway to regulate the epididymal initial segment (IS) maturation, sperm maturation and male fertility. Acts as an endogenous inhibitor of PRKCB in glia. The polypeptide is Protein kinase C-binding protein NELL2 (Nell2) (Rattus norvegicus (Rat)).